Reading from the N-terminus, the 275-residue chain is 4-diphosphocytidyl-2-C-methyl-D-erythritol kinase (275 aa).

The active site involves Lys15. Position 97-107 (97-107) interacts with ATP; that stretch reads PMGSGLGGGSS. The active site involves Asp137.

The protein belongs to the GHMP kinase family. IspE subfamily.

The catalysed reaction is 4-CDP-2-C-methyl-D-erythritol + ATP = 4-CDP-2-C-methyl-D-erythritol 2-phosphate + ADP + H(+). It participates in isoprenoid biosynthesis; isopentenyl diphosphate biosynthesis via DXP pathway; isopentenyl diphosphate from 1-deoxy-D-xylulose 5-phosphate: step 3/6. Its function is as follows. Catalyzes the phosphorylation of the position 2 hydroxy group of 4-diphosphocytidyl-2C-methyl-D-erythritol. The chain is 4-diphosphocytidyl-2-C-methyl-D-erythritol kinase from Pseudothermotoga lettingae (strain ATCC BAA-301 / DSM 14385 / NBRC 107922 / TMO) (Thermotoga lettingae).